The sequence spans 59 residues: Small, acid-soluble spore protein H (59 aa).

This sequence belongs to the SspH family.

It localises to the spore core. This is Small, acid-soluble spore protein H from Alkaliphilus metalliredigens (strain QYMF).